Consider the following 242-residue polypeptide: Intraflagellar transport-associated protein (242 aa).

S57 carries the phosphoserine modification.

Interacts with IFT122; the interaction associates IFTAP with IFT-A complex.

Its function is as follows. Seems to play a role in ciliary BBSome localization, maybe through interaction with IFT-A complex. In Bos taurus (Bovine), this protein is Intraflagellar transport-associated protein (IFTAP).